We begin with the raw amino-acid sequence, 182 residues long: Bifunctional protein PyrR (182 aa).

Positions 99–111 match the PRPP-binding motif; that stretch reads VVLVDDVLFTGRT.

This sequence belongs to the purine/pyrimidine phosphoribosyltransferase family. PyrR subfamily.

It carries out the reaction UMP + diphosphate = 5-phospho-alpha-D-ribose 1-diphosphate + uracil. Its function is as follows. Regulates the transcription of the pyrimidine nucleotide (pyr) operon in response to exogenous pyrimidines. In terms of biological role, also displays a weak uracil phosphoribosyltransferase activity which is not physiologically significant. The polypeptide is Bifunctional protein PyrR (Chloroflexus aurantiacus (strain ATCC 29366 / DSM 635 / J-10-fl)).